We begin with the raw amino-acid sequence, 237 residues long: MKSLSFLNHEFEAFPSPELALTDPNGLLAIGGDLRPERLLSAYYNGIFPWFNSDDPILWWSPDPRAVFIPGEIHISTSLRKYLKKQPWRITINHAFTDVMAGCAQPREKQSGTWITQEIQMAYRELHYTGHAHSIEVWEGERLIGGLYGLAIGQVFCGESMFHRKTNASKAAVAALQQHLLKMGFKLIDAQVMNSHLESLGAKAIKRIDFITLLSELRNNPVDPATWTTKEVILELE.

This sequence belongs to the L/F-transferase family.

Its subcellular location is the cytoplasm. It carries out the reaction N-terminal L-lysyl-[protein] + L-leucyl-tRNA(Leu) = N-terminal L-leucyl-L-lysyl-[protein] + tRNA(Leu) + H(+). It catalyses the reaction N-terminal L-arginyl-[protein] + L-leucyl-tRNA(Leu) = N-terminal L-leucyl-L-arginyl-[protein] + tRNA(Leu) + H(+). The enzyme catalyses L-phenylalanyl-tRNA(Phe) + an N-terminal L-alpha-aminoacyl-[protein] = an N-terminal L-phenylalanyl-L-alpha-aminoacyl-[protein] + tRNA(Phe). In terms of biological role, functions in the N-end rule pathway of protein degradation where it conjugates Leu, Phe and, less efficiently, Met from aminoacyl-tRNAs to the N-termini of proteins containing an N-terminal arginine or lysine. The polypeptide is Leucyl/phenylalanyl-tRNA--protein transferase (Shewanella baltica (strain OS223)).